The sequence spans 266 residues: MAKMTTLKMKEKLEKELQAPNRQFSYNRDNDTLTVAQNGKKVTLTIPQIIANFENDGNAAVEKIVYYVEEGFRAAAGNVELENNKASIYPVVRATSFPDETKAGEALLTDDHTAETKIFYAVDLGKSYRFIEESMLKKAQLTHKEIREVAFNNLANLEIPLKKDSVNGNDFYFVRTNDGYDASRLLNEAFLREMREKLTGEMVLAVPHQDVLIIGDIQDNTGYDVLAHMTMDFFADGLVPITSLPFVYNNGKLEPIFIMAKNRLKE.

Belongs to the UPF0354 family.

The chain is UPF0354 protein Lm4b_01619 from Listeria monocytogenes serotype 4b (strain CLIP80459).